Consider the following 854-residue polypeptide: Alkaline phosphatase-like protein PglZ (854 aa).

The protein belongs to the alkaline phosphatase superfamily.

In terms of biological role, BREX systems (bacteriophage exclusion) provide immunity against bacteriophage. A core protein of a type 1 BREX system. This system allows phage adsorption but prevents phage DNA replication, without degradation of the phage DNA. Methylation of bacterial DNA by PglX probably guides self/non-self discrimination. When the brxA-brxB-brxC-pglX and pglZ-brxL operons are transformed into a susceptible B.subtilis strain (BEST7003) they confer resistance to bacteriophages SPbeta, SP16, Zeta, phi3T and SP02 and partial protection to phages SP01 and SP82G (these include lytic and temperate phage). They do not protect against phages phi105, rho10 or rho14. Additionally confers a very slight reduction in efficiency of plasmid transformation. The chain is Alkaline phosphatase-like protein PglZ from Bacillus cereus (strain H3081.97).